The chain runs to 183 residues: Probable chemoreceptor glutamine deamidase CheD (183 aa).

It belongs to the CheD family.

The enzyme catalyses L-glutaminyl-[protein] + H2O = L-glutamyl-[protein] + NH4(+). Probably deamidates glutamine residues to glutamate on methyl-accepting chemotaxis receptors (MCPs), playing an important role in chemotaxis. The polypeptide is Probable chemoreceptor glutamine deamidase CheD (Rhizobium meliloti (strain 1021) (Ensifer meliloti)).